The following is a 368-amino-acid chain: Solute carrier family 35 member G1 (368 aa).

10 helical membrane-spanning segments follow: residues 72–92, 100–120, 134–154, 161–181, 190–210, 225–245, 256–276, 289–309, 316–336, and 340–360; these read GLGL…SLFV, AVEI…PCLI, LFLF…YYAF, DATV…WIFL, AFFT…PFIF, IKGT…LVIL, LSIW…LFVI, LFLI…TKAV, LVAI…IAFF, and PTWW…GATI. EamA domains follow at residues 83–205 and 236–360; these read FLFS…LIVR and VLAA…GATI.

Belongs to the TMEM20 family. Interacts with STIM1; stimulated by depletion of intracellular calcium. Interacts with ORAI1. Interacts with the plasma membrane calcium-transporting ATPases ATP2B1 and ATP2B4. Interacts with ATP1A1, ATP2A2, KPNB1 and XPO1.

It is found in the cell membrane. The protein localises to the endoplasmic reticulum membrane. Its function is as follows. May play a role in intracellular calcium sensing and homeostasis. May act as a negative regulator of plasma membrane calcium-transporting ATPases preventing calcium efflux from the cell. In Mus musculus (Mouse), this protein is Solute carrier family 35 member G1 (Slc35g1).